The primary structure comprises 130 residues: Glycine cleavage system H protein (130 aa).

Residues 25–107 (IATIGITEFA…YGEGWFLKVR (83 aa)) enclose the Lipoyl-binding domain. Residue Lys-66 is modified to N6-lipoyllysine.

It belongs to the GcvH family. In terms of assembly, the glycine cleavage system is composed of four proteins: P, T, L and H. Requires (R)-lipoate as cofactor.

Its function is as follows. The glycine cleavage system catalyzes the degradation of glycine. The H protein shuttles the methylamine group of glycine from the P protein to the T protein. This chain is Glycine cleavage system H protein, found in Nostoc sp. (strain PCC 7120 / SAG 25.82 / UTEX 2576).